We begin with the raw amino-acid sequence, 78 residues long: MHEQLPLHDRALEARLIELETRLSFQEQALNELSEALADARLTGARNAELIRHLLEDLGKVRSTLFADAADEPPPPHY.

This sequence belongs to the SlyX family.

The chain is Protein SlyX homolog from Xanthomonas euvesicatoria pv. vesicatoria (strain 85-10) (Xanthomonas campestris pv. vesicatoria).